Reading from the N-terminus, the 660-residue chain is DNA ligase (660 aa).

NAD(+)-binding positions include 32 to 36 (DEVYD), 81 to 82 (SM), and Glu112. Lys114 acts as the N6-AMP-lysine intermediate in catalysis. NAD(+) is bound by residues Arg135, Glu169, Lys284, and Lys308. Zn(2+) contacts are provided by Cys402, Cys405, Cys418, and Cys423. In terms of domain architecture, BRCT spans 578–660 (VENSPLAHKT…ELLKEAGIEA (83 aa)).

This sequence belongs to the NAD-dependent DNA ligase family. LigA subfamily. The cofactor is Mg(2+). Mn(2+) serves as cofactor.

It catalyses the reaction NAD(+) + (deoxyribonucleotide)n-3'-hydroxyl + 5'-phospho-(deoxyribonucleotide)m = (deoxyribonucleotide)n+m + AMP + beta-nicotinamide D-nucleotide.. In terms of biological role, DNA ligase that catalyzes the formation of phosphodiester linkages between 5'-phosphoryl and 3'-hydroxyl groups in double-stranded DNA using NAD as a coenzyme and as the energy source for the reaction. It is essential for DNA replication and repair of damaged DNA. This Nitratiruptor sp. (strain SB155-2) protein is DNA ligase.